The chain runs to 317 residues: Ribonuclease Z (317 aa).

7 residues coordinate Zn(2+): H63, H65, D67, H68, H143, D213, and H273. The active-site Proton acceptor is the D67.

Belongs to the RNase Z family. Homodimer. Zn(2+) serves as cofactor.

It catalyses the reaction Endonucleolytic cleavage of RNA, removing extra 3' nucleotides from tRNA precursor, generating 3' termini of tRNAs. A 3'-hydroxy group is left at the tRNA terminus and a 5'-phosphoryl group is left at the trailer molecule.. Zinc phosphodiesterase, which displays some tRNA 3'-processing endonuclease activity. Probably involved in tRNA maturation, by removing a 3'-trailer from precursor tRNA. This is Ribonuclease Z from Methanocaldococcus jannaschii (strain ATCC 43067 / DSM 2661 / JAL-1 / JCM 10045 / NBRC 100440) (Methanococcus jannaschii).